A 155-amino-acid polypeptide reads, in one-letter code: Transcriptional repressor NrdR (155 aa).

Residues 3-34 (CPFCNQTDTKVIDSRLVADGVQVRRRRECQAC) fold into a zinc finger. The ATP-cone domain occupies 49 to 139 (PKVIKQDGTR…VYRSFQDISE (91 aa)).

It belongs to the NrdR family. Zn(2+) is required as a cofactor.

Functionally, negatively regulates transcription of bacterial ribonucleotide reductase nrd genes and operons by binding to NrdR-boxes. The chain is Transcriptional repressor NrdR from Teredinibacter turnerae (strain ATCC 39867 / T7901).